We begin with the raw amino-acid sequence, 449 residues long: 1H-pyrrole-2-carbonyl-[peptidyl-carrier protein] chlorinase (449 aa).

FAD-binding residues include Ala-16, Glu-35, Arg-41, His-43, Val-44, Ser-47, Arg-123, Ile-147, and Asp-316. Residues Ser-327 and Gly-328 each coordinate chloride. Position 329 (Val-329) interacts with FAD.

This sequence belongs to the flavin-dependent halogenase family. Homodimer.

It catalyses the reaction (1H-pyrrole-2-carbonyl)-[peptidyl-carrier protein] + 2 FADH2 + 2 chloride + 2 O2 = (4,5-dichloro-1H-pyrrole-2-carbonyl)-[peptidyl-carrier protein] + 2 FAD + 4 H2O. The catalysed reaction is (1H-pyrrole-2-carbonyl)-[peptidyl-carrier protein] + FADH2 + chloride + O2 = (5-chloro-1H-pyrrole-2-carbonyl)-[peptidyl-carrier protein] + FAD + 2 H2O. It carries out the reaction (5-chloro-1H-pyrrole-2-carbonyl)-[peptidyl-carrier protein] + FADH2 + chloride + O2 = (4,5-dichloro-1H-pyrrole-2-carbonyl)-[peptidyl-carrier protein] + FAD + 2 H2O. Its pathway is antibiotic biosynthesis. Functionally, involved in the biosynthesis of the antibiotic pyoluteorin. Catalyzes the dichlorination of the pyrrole ring of pyrrolyl-S-PltL, generating the 5-chloropyrrolyl-S-PltL intermediate and then the 4,5-dichloropyrrolyl-S-PltL product. This chain is 1H-pyrrole-2-carbonyl-[peptidyl-carrier protein] chlorinase, found in Pseudomonas fluorescens (strain ATCC BAA-477 / NRRL B-23932 / Pf-5).